Consider the following 60-residue polypeptide: UPF0434 protein Aave_2563 (60 aa).

This sequence belongs to the UPF0434 family.

This Paracidovorax citrulli (strain AAC00-1) (Acidovorax citrulli) protein is UPF0434 protein Aave_2563.